A 306-amino-acid polypeptide reads, in one-letter code: Curved DNA-binding protein (306 aa).

The J domain maps to 5-69; that stretch reads DYYAIMGVKP…QRRAEYDQLW (65 aa).

It is found in the cytoplasm. Its subcellular location is the nucleoid. DNA-binding protein that preferentially recognizes a curved DNA sequence. It is probably a functional analog of DnaJ; displays overlapping activities with DnaJ, but functions under different conditions, probably acting as a molecular chaperone in an adaptive response to environmental stresses other than heat shock. Lacks autonomous chaperone activity; binds native substrates and targets them for recognition by DnaK. Its activity is inhibited by the binding of CbpM. This Salmonella arizonae (strain ATCC BAA-731 / CDC346-86 / RSK2980) protein is Curved DNA-binding protein.